The primary structure comprises 166 residues: NAD(P)H-quinone oxidoreductase subunit I, chloroplastic (166 aa).

4Fe-4S ferredoxin-type domains lie at 55–84 (GRIH…VDWK) and 95–124 (LNYS…MTEE). 8 residues coordinate [4Fe-4S] cluster: Cys-64, Cys-67, Cys-70, Cys-74, Cys-104, Cys-107, Cys-110, and Cys-114.

The protein belongs to the complex I 23 kDa subunit family. In terms of assembly, NDH is composed of at least 16 different subunits, 5 of which are encoded in the nucleus. [4Fe-4S] cluster serves as cofactor.

Its subcellular location is the plastid. It localises to the chloroplast thylakoid membrane. It carries out the reaction a plastoquinone + NADH + (n+1) H(+)(in) = a plastoquinol + NAD(+) + n H(+)(out). The enzyme catalyses a plastoquinone + NADPH + (n+1) H(+)(in) = a plastoquinol + NADP(+) + n H(+)(out). NDH shuttles electrons from NAD(P)H:plastoquinone, via FMN and iron-sulfur (Fe-S) centers, to quinones in the photosynthetic chain and possibly in a chloroplast respiratory chain. The immediate electron acceptor for the enzyme in this species is believed to be plastoquinone. Couples the redox reaction to proton translocation, and thus conserves the redox energy in a proton gradient. This chain is NAD(P)H-quinone oxidoreductase subunit I, chloroplastic, found in Encelia californica (Bush sunflower).